The primary structure comprises 957 residues: MTQTLSQLENRGAFIERHIGPDAAQQQEMLNAVGAESLNALTGQIVPKDIQLATPPQVGEAATEYAALAELKAIAGRNKRFTSYIGMGYTAVQLPPVILRNMLENPGWYTAYTPYQPEVSQGRLEALLNFQQVTLDLTGLDMASASLLDEATAAAEAMAMAKRVSKLKNANRFFVASDVHPQTLDVVRTRAETFGFDVIVDDAAKALDHQDVFGVLLQQVGSTGEIHDYSALISELKARKVIVSVAADFMALVLLTAPGKQGADIVFGSAQRFGVPMGYGGPHAAFFAAKDEFKRSMPGRIIGVSKDAAGNTALRMAMQTREQHIRREKANSNICTSQVLLANIASLYAVYHGPVGLKRIANRIHRLTDILAAGLQQKGLKLRHAHYFDTLCVEVADKAAVLARAEAAEINLRSDIHNAVGITLDETTTRENVAQLFNVLLGDSHGLNIETLDKDVALDSRSIQQSMLRDDAILTHPVFNRYHSETEMMRYMHSLERKDLALNQAMIPLGSCTMKLNAAAEMIPITWPEFAELHPFCPPEQAEGYHQMISQLSDWLVKLTGYDAVCMQPNSGAQGEYAGLLAIRHYHESRNEGHRDICLIPASAHGTNPASAHMAGMQVVVVACDKNGNIDLDDLRAKAEQHAANLSCIMVTYPSTHGVYEETIREVCEVVHQFGGQVYLDGANMNAQVGITSPGFIGADVSHLNLHKTFCIPHGGGGPGMGPIGVKAHLAPFVPGHSVVQIEGMLTRQGAVSAAPFGSASILPISWMYIRMMGAEGMKQASQVAILNANYIASRLKDAYPVLYTGRDGRVAHECILDIRPLKEETGISELDIAKRLIDYGFHAPTMSFPVAGTLMVEPTESEGKAELDRFIDAMLAIRAEIDQVKAGVWPLEDNPLVNAPHIQSELVAEWAHPYSREVAVFPAGVADKYWPTVKRLDDVYGDRNLFCSCVPISDYQ.

K708 carries the post-translational modification N6-(pyridoxal phosphate)lysine.

The protein belongs to the GcvP family. In terms of assembly, the glycine cleavage system is composed of four proteins: P, T, L and H. It depends on pyridoxal 5'-phosphate as a cofactor.

The enzyme catalyses N(6)-[(R)-lipoyl]-L-lysyl-[glycine-cleavage complex H protein] + glycine + H(+) = N(6)-[(R)-S(8)-aminomethyldihydrolipoyl]-L-lysyl-[glycine-cleavage complex H protein] + CO2. Its function is as follows. The glycine cleavage system catalyzes the degradation of glycine. The P protein binds the alpha-amino group of glycine through its pyridoxal phosphate cofactor; CO(2) is released and the remaining methylamine moiety is then transferred to the lipoamide cofactor of the H protein. The sequence is that of Glycine dehydrogenase (decarboxylating) from Salmonella agona (strain SL483).